The chain runs to 595 residues: Alpha-1,3-galactosidase B (595 aa).

Residues 1-22 (MKTILLFALSLLLSLSVSDVCA) form the signal peptide. PbH1 repeat units follow at residues 432–454 (TPEV…LFST), 455–477 (PKKT…LLCG), and 488–541 (CRDV…VIED).

The protein belongs to the glycosyl hydrolase 110 family. B subfamily.

The enzyme catalyses Hydrolysis of terminal, non-reducing branched (1-&gt;3)-alpha-D-galactosidic residues, producing free D-galactose.. It catalyses the reaction Hydrolysis of terminal, non-reducing linear (1-&gt;3)-alpha-D-galactosidic residues, producing free D-galactose.. The catalysed reaction is Hydrolysis of terminal, non-reducing alpha-D-galactose residues in alpha-D-galactosides, including galactose oligosaccharides, galactomannans and galactolipids.. Alpha-galactosidase. Removes both branched alpha-1,3-linked galactose residues of blood group B antigens and linear alpha-1,3-linked galactose structures. The protein is Alpha-1,3-galactosidase B (glaB) of Bacteroides fragilis (strain YCH46).